A 115-amino-acid chain; its full sequence is NADH-ubiquinone oxidoreductase chain 3 (115 aa).

Transmembrane regions (helical) follow at residues Val3 to Trp23, Phe55 to Leu75, and Leu84 to Tyr104.

Belongs to the complex I subunit 3 family. As to quaternary structure, core subunit of respiratory chain NADH dehydrogenase (Complex I) which is composed of 45 different subunits. Interacts with TMEM186. Interacts with TMEM242.

Its subcellular location is the mitochondrion inner membrane. The catalysed reaction is a ubiquinone + NADH + 5 H(+)(in) = a ubiquinol + NAD(+) + 4 H(+)(out). In terms of biological role, core subunit of the mitochondrial membrane respiratory chain NADH dehydrogenase (Complex I) which catalyzes electron transfer from NADH through the respiratory chain, using ubiquinone as an electron acceptor. Essential for the catalytic activity of complex I. This chain is NADH-ubiquinone oxidoreductase chain 3, found in Felis catus (Cat).